Consider the following 385-residue polypeptide: 1-deoxy-D-xylulose 5-phosphate reductoisomerase (385 aa).

Thr10, Gly11, Ser12, Ile13, Lys37, and Asn124 together coordinate NADPH. 1-deoxy-D-xylulose 5-phosphate is bound at residue Lys125. Residue Glu126 participates in NADPH binding. Asp150 contacts Mn(2+). 1-deoxy-D-xylulose 5-phosphate-binding residues include Ser151, Glu152, Ser176, and His199. Residue Glu152 coordinates Mn(2+). Residue Gly205 coordinates NADPH. Residues Ser212, Asn217, Lys218, and Glu221 each contribute to the 1-deoxy-D-xylulose 5-phosphate site. Position 221 (Glu221) interacts with Mn(2+).

Belongs to the DXR family. Mg(2+) serves as cofactor. It depends on Mn(2+) as a cofactor.

The catalysed reaction is 2-C-methyl-D-erythritol 4-phosphate + NADP(+) = 1-deoxy-D-xylulose 5-phosphate + NADPH + H(+). It functions in the pathway isoprenoid biosynthesis; isopentenyl diphosphate biosynthesis via DXP pathway; isopentenyl diphosphate from 1-deoxy-D-xylulose 5-phosphate: step 1/6. Functionally, catalyzes the NADPH-dependent rearrangement and reduction of 1-deoxy-D-xylulose-5-phosphate (DXP) to 2-C-methyl-D-erythritol 4-phosphate (MEP). This is 1-deoxy-D-xylulose 5-phosphate reductoisomerase from Clostridium botulinum (strain Loch Maree / Type A3).